The following is a 228-amino-acid chain: Ribosomal RNA small subunit methyltransferase G (228 aa).

S-adenosyl-L-methionine-binding positions include glycine 89, leucine 94, 140–141 (VE), and arginine 159.

The protein belongs to the methyltransferase superfamily. RNA methyltransferase RsmG family.

Its subcellular location is the cytoplasm. It carries out the reaction guanosine(527) in 16S rRNA + S-adenosyl-L-methionine = N(7)-methylguanosine(527) in 16S rRNA + S-adenosyl-L-homocysteine. Its function is as follows. Specifically methylates the N7 position of guanine in position 527 of 16S rRNA. This chain is Ribosomal RNA small subunit methyltransferase G, found in Burkholderia cenocepacia (strain ATCC BAA-245 / DSM 16553 / LMG 16656 / NCTC 13227 / J2315 / CF5610) (Burkholderia cepacia (strain J2315)).